The sequence spans 267 residues: Ribosyldihydronicotinamide dehydrogenase-like protein traD (267 aa).

Residues H9, 15 to 16 (LN), and 100 to 103 (LWWF) each bind FAD. 122-124 (GHG) is a substrate binding site. FAD contacts are provided by residues 152 to 155 (TLGG) and Y160.

It belongs to the NAD(P)H dehydrogenase (quinone) family. As to quaternary structure, homodimer. Requires FAD as cofactor.

The protein operates within secondary metabolite biosynthesis. Ribosyldihydronicotinamide dehydrogenase-like protein; part of the tra gene cluster that produces terrestric acid. The clavatol biosynthesis cluster cla and the terrestric acid cluster tra are both involved in the production of peniphenones and penilactones. The non-reducing PKS claF is responsible for the formation of clavatol from successive condensations of 3 malonyl-CoA units, presumably with a simple acetyl-CoA starter unit, and 2 methylation steps. The esterase claE probably collaborates with claF by catalyzing the hydrolysis of ACP-bound acyl intermediates to free the ACP from stalled intermediates. The clavatol oxidase claD then converts clavatol to hydroxyclavatol. Spontaneous dehydration of hydroxyclavatol leads to the accumulation of the highly active ortho-quinone methide. On the other hand, the PKS-NRPS hybrid traA is involved in the formation of crustosic acid, with the help of traB and traD. The polyketide synthase module (PKS) of traA is responsible for the synthesis of the polyketide backbone via the condensation of an acetyl-CoA starter unit with 3 malonyl-CoA units. The downstream nonribosomal peptide synthetase (NRPS) module then amidates the carboxyl end of the polyketide with L-malic acid. Because traA lacks a designated enoylreductase (ER) domain, the required activity is provided the enoyl reductase traG. Crustosic acid undergoes decarboxylation and isomerization to the terrestric acid, catalyzed by the 2-oxoglutarate-dependent dioxygenase traH. Both acids are further converted to the 2 gamma-butyrolactones (R)-5-methyltetronic acid and (S)-5-carboxylmethyltetronic acid, with involvement of the cytochrome P450 monooxygenase claJ. Spontaneous addition of the methide to these gamma-butyrolactones leads to peniphenone D and penilactone D, which undergo again stereospecific attacking by methide to give penilactones A and B. This Penicillium crustosum (Blue mold fungus) protein is Ribosyldihydronicotinamide dehydrogenase-like protein traD.